The chain runs to 613 residues: MPVRQLPEQVINRIAAGEVVERPASVVKELVENAIDAGASRIDIFTDGGGRRKIAITDDGGGMTAADLALAVERHATSKLDDEDLLQIRTLGFRGEALPSIGSVARLSITTRHKSEPHAWGITVDCGDKSQIVPAALNQGTRVEVADLFHATPARLKFLKTDRTEAEAIREVVRRLAMARPDIAFTVAGEERAPVTWAAALPGAPGQLTRLGDILGTDFRSHAIAVRSERDHVAVEGFAAAPALTRANALGQYLFVNGRPVRDKLILGAVRAAYADYLPRDRHPVVALFVTLDPREVDANVHPAKTEVRFRNAGLVRALIIHALKEGLAREGRRTAANDGGATIAAFRPAFTPPRPSAGPMNWDWQRSPSAPIPRHDDVDSMPPAVSSAAFAEPMQAAFDVGGPRADLRLHEQPAAPDMLDRPLGAARTQIHDTYIVSQTRDGLVIVDQHAAHERIVYERLKTSLAAHGVQRQILLIPDIVELDEATVEALLARTDELAAFGLAVESFGPGAVAVRETPSLLGKINAAGLLRDLAEHMEEWGEALPLERRLMHVAATMACHGSVRAGRRLKPEEMNALLRVMEETPNSGQCNHGRPTYVELKLADVEKLFGRR.

Belongs to the DNA mismatch repair MutL/HexB family.

Functionally, this protein is involved in the repair of mismatches in DNA. It is required for dam-dependent methyl-directed DNA mismatch repair. May act as a 'molecular matchmaker', a protein that promotes the formation of a stable complex between two or more DNA-binding proteins in an ATP-dependent manner without itself being part of a final effector complex. The sequence is that of DNA mismatch repair protein MutL from Bradyrhizobium sp. (strain ORS 278).